The following is a 264-amino-acid chain: MKAYLDLMRHVLDNGTDKSDRTGTGTRSVFGYQMRFDLGKGFPLLTTKKLHLRSIIHELLWFLKGDTNIKYLKDNNVSIWDEWADENGDLGPVYGYQWRSWPAPDGRHIDQIANVVEQIKKNPDSRRLIVSAWNPALVDEMALPPCHALFQFYVADGKLSCQLYQRSADIFLGVPFNIASYALLTMMMAQVCGLEAGEFVHTFGDAHLYRNHFEQAALQLEREPRALPVMKINPEVKDLFAFKFEDFELEGYDPHPHIKAVVSV.

DUMP is bound at residue arginine 21. Residue histidine 51 participates in (6R)-5,10-methylene-5,6,7,8-tetrahydrofolate binding. Position 126 to 127 (126 to 127 (RR)) interacts with dUMP. Cysteine 146 (nucleophile) is an active-site residue. Residues 166–169 (RSAD), asparagine 177, and 207–209 (HLY) contribute to the dUMP site. A (6R)-5,10-methylene-5,6,7,8-tetrahydrofolate-binding site is contributed by aspartate 169. Serine 263 provides a ligand contact to (6R)-5,10-methylene-5,6,7,8-tetrahydrofolate.

Belongs to the thymidylate synthase family. Bacterial-type ThyA subfamily. In terms of assembly, homodimer.

It localises to the cytoplasm. It carries out the reaction dUMP + (6R)-5,10-methylene-5,6,7,8-tetrahydrofolate = 7,8-dihydrofolate + dTMP. The protein operates within pyrimidine metabolism; dTTP biosynthesis. Its function is as follows. Catalyzes the reductive methylation of 2'-deoxyuridine-5'-monophosphate (dUMP) to 2'-deoxythymidine-5'-monophosphate (dTMP) while utilizing 5,10-methylenetetrahydrofolate (mTHF) as the methyl donor and reductant in the reaction, yielding dihydrofolate (DHF) as a by-product. This enzymatic reaction provides an intracellular de novo source of dTMP, an essential precursor for DNA biosynthesis. The polypeptide is Thymidylate synthase (Neisseria gonorrhoeae (strain ATCC 700825 / FA 1090)).